A 999-amino-acid chain; its full sequence is Tyrosine-protein kinase Mer (999 aa).

The signal sequence occupies residues 1-20 (MGPAPLPLLLGLFLPALWRR). Residues 21–505 (AITEAREEAK…PGNADPVLII (485 aa)) are Extracellular-facing. Ig-like C2-type domains lie at 81–186 (PQVT…EIVS) and 197–273 (PHFT…LTVS). N-linked (GlcNAc...) asparagine glycosylation is found at Asn-114, Asn-170, Asn-207, Asn-215, Asn-234, Asn-294, Asn-316, Asn-329, Asn-336, Asn-354, Asn-389, Asn-395, Asn-442, and Asn-454. A disulfide bond links Cys-115 and Cys-175. A disulfide bridge connects residues Cys-218 and Cys-262. Fibronectin type-III domains lie at 286–381 (PPTE…TTEG) and 386–484 (APLN…PAHG). A helical membrane pass occupies residues 506–526 (FGCFCGFILIGLILYISLAIR). Topologically, residues 527-999 (KRVQETKFGN…DSSEGSEVLM (473 aa)) are cytoplasmic. Phosphoserine is present on Ser-543. The region spanning 587 to 858 (LILGKILGEG…VLRLQLEKLL (272 aa)) is the Protein kinase domain. ATP-binding positions include 593–601 (LGEGEFGSV) and Lys-615. Asp-723 serves as the catalytic Proton acceptor. A phosphotyrosine; by autocatalysis mark is found at Tyr-749, Tyr-753, Tyr-754, and Tyr-872. Ser-935 bears the Phosphoserine mark.

It belongs to the protein kinase superfamily. Tyr protein kinase family. AXL/UFO subfamily. Interacts (upon activation) with TNK2; stimulates TNK2 autophosphorylation. Interacts (via N-terminus) with extracellular ligands LGALS3, TUB, TULP1 and GAS6. Interacts with VAV1 in a phosphotyrosine-independent manner. Interacts with TIMD4; this interaction enhances TIMD4-mediated efferocytosis. In terms of processing, autophosphorylated on Tyr-749, Tyr-753 and Tyr-754 in the activation loop allowing full activity. Autophosphorylated on Tyr-872 leading to recruitment of downstream partners of the signaling cascade such as PLCG2. Not expressed in normal B- and T-lymphocytes but is expressed in numerous neoplastic B- and T-cell lines. Highly expressed in testis, ovary, prostate, lung, and kidney, with lower expression in spleen, small intestine, colon, and liver.

It is found in the cell membrane. It catalyses the reaction L-tyrosyl-[protein] + ATP = O-phospho-L-tyrosyl-[protein] + ADP + H(+). Functionally, receptor tyrosine kinase that transduces signals from the extracellular matrix into the cytoplasm by binding to several ligands including LGALS3, TUB, TULP1 or GAS6. Regulates many physiological processes including cell survival, migration, differentiation, and phagocytosis of apoptotic cells (efferocytosis). Ligand binding at the cell surface induces autophosphorylation of MERTK on its intracellular domain that provides docking sites for downstream signaling molecules. Following activation by ligand, interacts with GRB2 or PLCG2 and induces phosphorylation of MAPK1, MAPK2, FAK/PTK2 or RAC1. MERTK signaling plays a role in various processes such as macrophage clearance of apoptotic cells, platelet aggregation, cytoskeleton reorganization and engulfment. Functions in the retinal pigment epithelium (RPE) as a regulator of rod outer segments fragments phagocytosis. Also plays an important role in inhibition of Toll-like receptors (TLRs)-mediated innate immune response by activating STAT1, which selectively induces production of suppressors of cytokine signaling SOCS1 and SOCS3. The sequence is that of Tyrosine-protein kinase Mer (MERTK) from Homo sapiens (Human).